The following is a 432-amino-acid chain: Adenylosuccinate synthetase (432 aa).

GTP contacts are provided by residues 12 to 18 (GDEGKGK) and 40 to 42 (GHT). Catalysis depends on D13, which acts as the Proton acceptor. Mg(2+) is bound by residues D13 and G40. Residues 13-16 (DEGK), 38-41 (NAGH), T129, R143, Q224, T239, and R303 contribute to the IMP site. H41 (proton donor) is an active-site residue. 299–305 (VTTGRRR) serves as a coordination point for substrate. Residues R305, 331–333 (KLD), and 413–415 (GVG) each bind GTP.

Belongs to the adenylosuccinate synthetase family. Homodimer. Mg(2+) is required as a cofactor.

The protein localises to the cytoplasm. The enzyme catalyses IMP + L-aspartate + GTP = N(6)-(1,2-dicarboxyethyl)-AMP + GDP + phosphate + 2 H(+). It participates in purine metabolism; AMP biosynthesis via de novo pathway; AMP from IMP: step 1/2. Its function is as follows. Plays an important role in the de novo pathway of purine nucleotide biosynthesis. Catalyzes the first committed step in the biosynthesis of AMP from IMP. The chain is Adenylosuccinate synthetase from Mycolicibacterium paratuberculosis (strain ATCC BAA-968 / K-10) (Mycobacterium paratuberculosis).